The chain runs to 296 residues: Thymidylate synthase (296 aa).

DUMP contacts are provided by residues Arg-23 and 157 to 158 (RR). Cys-177 serves as the catalytic Nucleophile. DUMP-binding positions include 198-201 (RSAD), Asn-209, and 239-241 (HIY). (6R)-5,10-methylene-5,6,7,8-tetrahydrofolate is bound at residue Asp-201. Ala-295 lines the (6R)-5,10-methylene-5,6,7,8-tetrahydrofolate pocket.

It belongs to the thymidylate synthase family. Bacterial-type ThyA subfamily. In terms of assembly, homodimer.

The protein localises to the cytoplasm. The catalysed reaction is dUMP + (6R)-5,10-methylene-5,6,7,8-tetrahydrofolate = 7,8-dihydrofolate + dTMP. The protein operates within pyrimidine metabolism; dTTP biosynthesis. Functionally, catalyzes the reductive methylation of 2'-deoxyuridine-5'-monophosphate (dUMP) to 2'-deoxythymidine-5'-monophosphate (dTMP) while utilizing 5,10-methylenetetrahydrofolate (mTHF) as the methyl donor and reductant in the reaction, yielding dihydrofolate (DHF) as a by-product. This enzymatic reaction provides an intracellular de novo source of dTMP, an essential precursor for DNA biosynthesis. The sequence is that of Thymidylate synthase from Zymomonas mobilis subsp. mobilis (strain ATCC 31821 / ZM4 / CP4).